A 328-amino-acid polypeptide reads, in one-letter code: 17-beta-hydroxysteroid dehydrogenase type 1 (328 aa).

Residues Gly-10–Arg-38 and Asp-66 each bind NADP(+). Ser-135 bears the Phosphoserine; by PKA mark. Ser-143 is a substrate binding site. Tyr-156 (proton acceptor) is an active-site residue. An NADP(+)-binding site is contributed by Lys-160. The disordered stretch occupies residues Lys-291–Gln-328.

It belongs to the short-chain dehydrogenases/reductases (SDR) family. Homodimer. Exists predominantly as a homodimer but also exits as monomer.

The protein localises to the cytoplasm. It catalyses the reaction 17beta-estradiol + NAD(+) = estrone + NADH + H(+). It carries out the reaction 17beta-estradiol + NADP(+) = estrone + NADPH + H(+). The enzyme catalyses testosterone + NADP(+) = androst-4-ene-3,17-dione + NADPH + H(+). It participates in steroid biosynthesis; estrogen biosynthesis. In terms of biological role, favors the reduction of estrogens and androgens. Converts estrone (E1) to a more potent estrogen, 17beta-estradiol (E2). Also has 20-alpha-HSD activity. Uses preferentially NADH. The polypeptide is 17-beta-hydroxysteroid dehydrogenase type 1 (Homo sapiens (Human)).